We begin with the raw amino-acid sequence, 264 residues long: Heavy metal-associated isoprenylated plant protein 17 (264 aa).

HMA domains follow at residues 32–95 (VTDA…KKIE) and 133–204 (IMEV…KERQ). A coiled-coil region spans residues 185-218 (SRKLNKKMHQKIKKAEKERQEWESEMMLREAEEE). A Cysteine methyl ester modification is found at cysteine 261. A lipid anchor (S-farnesyl cysteine) is attached at cysteine 261. The propeptide at 262-264 (SIS) is removed in mature form.

Belongs to the HIPP family.

Its function is as follows. Probable heavy-metal-binding protein. This Arabidopsis thaliana (Mouse-ear cress) protein is Heavy metal-associated isoprenylated plant protein 17.